A 311-amino-acid polypeptide reads, in one-letter code: Glycerol-3-phosphate dehydrogenase [NAD(P)+] (311 aa).

NADPH-binding residues include W12, R31, R32, and K96. Residues K96, G124, and S126 each coordinate sn-glycerol 3-phosphate. An NADPH-binding site is contributed by A128. The sn-glycerol 3-phosphate site is built by K178, D231, S241, R242, and N243. The Proton acceptor role is filled by K178. Residue R242 coordinates NADPH. NADPH contacts are provided by V266 and E268.

Belongs to the NAD-dependent glycerol-3-phosphate dehydrogenase family.

The protein resides in the cytoplasm. The enzyme catalyses sn-glycerol 3-phosphate + NAD(+) = dihydroxyacetone phosphate + NADH + H(+). The catalysed reaction is sn-glycerol 3-phosphate + NADP(+) = dihydroxyacetone phosphate + NADPH + H(+). It functions in the pathway membrane lipid metabolism; glycerophospholipid metabolism. Functionally, catalyzes the reduction of the glycolytic intermediate dihydroxyacetone phosphate (DHAP) to sn-glycerol 3-phosphate (G3P), the key precursor for phospholipid synthesis. This is Glycerol-3-phosphate dehydrogenase [NAD(P)+] from Helicobacter hepaticus (strain ATCC 51449 / 3B1).